Reading from the N-terminus, the 485-residue chain is MVVTFTSRRSEPVLLRPARPTPRETKQLSDLDDQRTLRYYETVVGFFRRCDGGAAGAVGAPADPAKAIRAALAEALVYYYPVAGRLREVADGGGAGNRLVVDCTAEGVVFVEADADVRLEDFGQPLLPPYPCVGELLCDAGDTRAVVGKPLLLMQVTQLKCGGFVLGFHICHNIADGFGMAQLIMAIADLARGEPAPTILPVWRRDLLTAARLGSGAVARTPFASAAAASASASSPALQNGARRAAAAADAMLSTPPDRMVVEYFLFGPREVSYLRGQLPAHLADSTTVFELLTAVMWRCRTAALGYGPDLRVRLMITMNARGRWNAHTPLPRGFYGNAHVSPVAEAAAGDLLGRPLADTVELVRRTKRGMTRERMSAMVETVAQLREWPPSSMDRVYEVSDIKWTTVNLLKFGWAEFAGGGIPLAGDLTSKLGSDHTRCKNSAGEVSTVVSMLLPRVAMARFKKEMAVLLNKDDKKSLTIMSSL.

Histidine 172 (proton acceptor) is an active-site residue.

It belongs to the plant acyltransferase family. In terms of tissue distribution, highly expressed in young panicles. Expressed in leaf sheaths and panicles.

In terms of biological role, involved in defense against pathogens. May contribute to disease resistance by potentiating disease resistance signaling, or producing phytoalexin-like secondary products. The protein is Acyl transferase 1 of Oryza sativa subsp. japonica (Rice).